A 248-amino-acid polypeptide reads, in one-letter code: UPF0246 protein A1G_03985 (248 aa).

Belongs to the UPF0246 family.

This chain is UPF0246 protein A1G_03985, found in Rickettsia rickettsii (strain Sheila Smith).